The following is an 813-amino-acid chain: Ribosome-releasing factor 2, mitochondrial (813 aa).

A mitochondrion-targeting transit peptide spans 1–20; sequence MLRIVWKPLKIRLPVWRRYQ. Residues 26 to 314 enclose the tr-type G domain; it reads NSIRNVGIIA…AIIDYLPSPV (289 aa). GTP is bound by residues 35 to 42, 99 to 103, and 153 to 156; these read AHIDAGKT, DTPGH, and NKMD.

The protein belongs to the TRAFAC class translation factor GTPase superfamily. Classic translation factor GTPase family. EF-G/EF-2 subfamily.

It is found in the mitochondrion. Functionally, mitochondrial GTPase that mediates the disassembly of ribosomes from messenger RNA at the termination of mitochondrial protein biosynthesis. Not involved in the GTP-dependent ribosomal translocation step during translation elongation. This chain is Ribosome-releasing factor 2, mitochondrial (mef2), found in Schizosaccharomyces pombe (strain 972 / ATCC 24843) (Fission yeast).